A 274-amino-acid polypeptide reads, in one-letter code: NH(3)-dependent NAD(+) synthetase (274 aa).

Position 46 to 53 (46 to 53) interacts with ATP; that stretch reads GISGGQDS. Asp-52 provides a ligand contact to Mg(2+). A deamido-NAD(+)-binding site is contributed by Arg-140. ATP is bound at residue Thr-160. Glu-165 contributes to the Mg(2+) binding site. Residues Lys-173 and Asp-180 each contribute to the deamido-NAD(+) site. ATP is bound by residues Lys-189 and Thr-211. 260 to 261 is a binding site for deamido-NAD(+); it reads HK.

Belongs to the NAD synthetase family. Homodimer.

It catalyses the reaction deamido-NAD(+) + NH4(+) + ATP = AMP + diphosphate + NAD(+) + H(+). It participates in cofactor biosynthesis; NAD(+) biosynthesis; NAD(+) from deamido-NAD(+) (ammonia route): step 1/1. Its function is as follows. Catalyzes the ATP-dependent amidation of deamido-NAD to form NAD. Uses ammonia as a nitrogen source. The polypeptide is NH(3)-dependent NAD(+) synthetase (Lysinibacillus sphaericus (strain C3-41)).